Reading from the N-terminus, the 188-residue chain is GTPase KRas (188 aa).

Methionine 1 carries the post-translational modification N-acetylmethionine. N-acetylthreonine; in GTPase KRas, N-terminally processed is present on threonine 2. Residues 10–18 (GAGGVGKSA), 29–35 (VDEYDPT), and 59–60 (AG) each bind GTP. Residues 32–40 (YDPTIEDSY) carry the Effector region motif. Lysine 104 carries the post-translational modification N6-acetyllysine. Residue 116 to 119 (NKCD) coordinates GTP. Positions 166 to 185 (HKEKMSKDGKKKKKKSKTKC) are hypervariable region. A disordered region spans residues 167-188 (KEKMSKDGKKKKKKSKTKCIIM). Cysteine 185 carries the cysteine methyl ester modification. Residue cysteine 185 is the site of S-farnesyl cysteine attachment. Residues 186–188 (IIM) constitute a propeptide, removed in mature form.

This sequence belongs to the small GTPase superfamily. Ras family. Interacts with PHLPP. Interacts (active GTP-bound form preferentially) with RGS14. Interacts (when farnesylated) with PDE6D; this promotes dissociation from the cell membrane. Interacts with SOS1. Interacts (when farnesylated) with GPR31. Interacts with RAP1GDS1. Interacts (active GTP-bound form) with both SHOC2 and PP1c (all isoforms) to form a tertiary complex; SHOC2 and PP1c preferably bind M-Ras/MRAS, but they also bind K-Ras/KRAS, N-Ras/NRAS and H-Ras/HRAS. Interacts (GTP-bound form) with MAPKAP1/SIN1; inhibiting K-Ras/KRAS activity. Post-translationally, acetylation at Lys-104 prevents interaction with guanine nucleotide exchange factors (GEFs).

The protein resides in the cell membrane. Its subcellular location is the cytoplasm. It localises to the cytosol. It catalyses the reaction GTP + H2O = GDP + phosphate + H(+). Alternates between an inactive form bound to GDP and an active form bound to GTP. Activated by a guanine nucleotide-exchange factor (GEF) and inactivated by a GTPase-activating protein (GAP). Interaction with SOS1 promotes exchange of bound GDP to GTP. Ras proteins bind GDP/GTP and possess intrinsic GTPase activity. Plays an important role in the regulation of cell proliferation. Plays a role in promoting oncogenic events by inducing transcriptional silencing of tumor suppressor genes (TSGs) in colorectal cancer (CRC) cells in a ZNF304-dependent manner. This Monodelphis domestica (Gray short-tailed opossum) protein is GTPase KRas (KRAS).